The chain runs to 358 residues: Protein RecA (358 aa).

Residue 66 to 73 coordinates ATP; that stretch reads GPESSGKT.

Belongs to the RecA family.

The protein resides in the cytoplasm. Can catalyze the hydrolysis of ATP in the presence of single-stranded DNA, the ATP-dependent uptake of single-stranded DNA by duplex DNA, and the ATP-dependent hybridization of homologous single-stranded DNAs. It interacts with LexA causing its activation and leading to its autocatalytic cleavage. This chain is Protein RecA, found in Herpetosiphon aurantiacus (strain ATCC 23779 / DSM 785 / 114-95).